The chain runs to 202 residues: Casparian strip membrane protein 1 (202 aa).

Topologically, residues 1-42 (MEKNKSTAIEIAESSKESKGKAPLLAAAVGHDRAAGYKRGVS) are cytoplasmic. Residues 43–63 (IFDLFLRISAATAALAATIVM) traverse the membrane as a helical segment. At 64 to 90 (GTTEQTLPFFTQFFQFRAQYDDLPTFT) the chain is on the extracellular side. Residues 91-111 (FFVVGMAIVTGYLILSVPFSI) traverse the membrane as a helical segment. The Cytoplasmic portion of the chain corresponds to 112-130 (VCIARPVAIGPRFLLIVGD). Residues 131–151 (TLKAVLATSAAGSSAAIVYLA) form a helical membrane-spanning segment. The Extracellular portion of the chain corresponds to 152-173 (HNGNSDANWLDICQQFNDFCQR). The helical transmembrane segment at 174 to 194 (VSGAVVAAFVAVVLLIFLIVL) threads the bilayer. Residues 195–202 (SAMALRKN) lie on the Cytoplasmic side of the membrane.

This sequence belongs to the Casparian strip membrane proteins (CASP) family. In terms of assembly, homodimer and heterodimers.

It is found in the cell membrane. Functionally, regulates membrane-cell wall junctions and localized cell wall deposition. Required for establishment of the Casparian strip membrane domain (CSD) and the subsequent formation of Casparian strips, a cell wall modification of the root endodermis that determines an apoplastic barrier between the intraorganismal apoplasm and the extraorganismal apoplasm and prevents lateral diffusion. The chain is Casparian strip membrane protein 1 from Striga hermonthica (Purple witchweed).